We begin with the raw amino-acid sequence, 187 residues long: Orotate phosphoribosyltransferase (187 aa).

Residues Arg-99, Lys-100, Lys-103, His-105, and 125–133 (DDVITTGGS) each bind 5-phospho-alpha-D-ribose 1-diphosphate. Orotate-binding residues include Thr-129 and Arg-157.

This sequence belongs to the purine/pyrimidine phosphoribosyltransferase family. PyrE subfamily. In terms of assembly, homodimer. It depends on Mg(2+) as a cofactor.

The catalysed reaction is orotidine 5'-phosphate + diphosphate = orotate + 5-phospho-alpha-D-ribose 1-diphosphate. It participates in pyrimidine metabolism; UMP biosynthesis via de novo pathway; UMP from orotate: step 1/2. Catalyzes the transfer of a ribosyl phosphate group from 5-phosphoribose 1-diphosphate to orotate, leading to the formation of orotidine monophosphate (OMP). This chain is Orotate phosphoribosyltransferase, found in Leptospira borgpetersenii serovar Hardjo-bovis (strain L550).